A 777-amino-acid polypeptide reads, in one-letter code: Phosphate transporter PHO1 homolog 10 (777 aa).

Positions 1–322 constitute an SPX domain; that stretch reads MKFGKIFKKQ…SRNASRNYMK (322 aa). Residues 1–372 lie on the Cytoplasmic side of the membrane; the sequence is MKFGKIFKKQ…RPKVKRERHR (372 aa). Residues 373–393 traverse the membrane as a helical segment; that stretch reads VTFFSGFFSGCSIALVIAVVF. The Extracellular segment spans residues 394-408; the sequence is KIESRKIMEKNYGTE. A helical membrane pass occupies residues 409–429; it reads YMANIIPLYSLFGFIILHMLM. At 430–459 the chain is on the cytoplasmic side; the sequence is YSANIYFWKRYRVNYTFIFGFKQGTELGDR. The chain crosses the membrane as a helical span at residues 460 to 480; the sequence is EVFLVSTGLAVLAFVCFLLNL. At 481 to 496 the chain is on the extracellular side; the sequence is QLDMDWRMKHHKTLPE. The helical transmembrane segment at 497–517 threads the bilayer; it reads VIPLCLATIVLFILFCPFNII. The Cytoplasmic portion of the chain corresponds to 518-646; sequence YRSSRFFFIR…YELKKGRTWM (129 aa). The region spanning 581–775 is the EXS domain; sequence HSHGVYNAFY…HYYDDDDVDK (195 aa). Residues 647 to 667 traverse the membrane as a helical segment; it reads ILALVSSGVATGMNTFWDIVI. Residues 668–691 lie on the Extracellular side of the membrane; it reads DWGLLRKHSKNPYLRDKLLVPHKS. A helical membrane pass occupies residues 692 to 712; it reads VYFAAMVVNVILRVAWMQLVL. Over 713–777 the chain is Cytoplasmic; the sequence is EFNLKSLHKI…YDDDDVDKDD (65 aa).

The protein belongs to the SYG1 (TC 2.A.94) family. Expressed in root epidermis and cortex, leaf blades and hydathodes, stems and flowers.

The protein resides in the cell membrane. Its function is as follows. May transport inorganic phosphate (Pi). The polypeptide is Phosphate transporter PHO1 homolog 10 (PHO1-H10) (Arabidopsis thaliana (Mouse-ear cress)).